The following is a 136-amino-acid chain: Classical arabinogalactan protein 26 (136 aa).

A signal peptide spans 1-21; it reads MSVSLFTAFTVLSLCLHTSTS. The segment at 38-95 is disordered; the sequence is APSSFSASTPAMSPDTSPLFPTPGSSEMSPSPSESSIMPTIPSSLSPPNPDAVTPDPL. Positions 40–53 are enriched in polar residues; it reads SSFSASTPAMSPDT. Residues 59–81 show a composition bias toward low complexity; sequence TPGSSEMSPSPSESSIMPTIPSS. A lipid anchor (GPI-anchor amidated serine) is attached at serine 108. A propeptide spans 109 to 136 (removed in mature form); sequence SSVCLVSSQLSSLLLVLLMLLLAFCSFF.

It belongs to the classical AGP family. O-glycosylated on the hydroxyproline residues.

The protein resides in the cell membrane. In terms of biological role, proteoglycan that seems to be implicated in diverse developmental roles such as differentiation, cell-cell recognition, embryogenesis and programmed cell death. In Arabidopsis thaliana (Mouse-ear cress), this protein is Classical arabinogalactan protein 26 (AGP26).